Consider the following 183-residue polypeptide: Shikimate kinase (183 aa).

ATP is bound at residue 15–20; it reads GSGKST. Ser-19 contributes to the Mg(2+) binding site. Positions 37, 61, and 85 each coordinate substrate. Position 123 (Arg-123) interacts with ATP. Residue Arg-142 coordinates substrate.

It belongs to the shikimate kinase family. As to quaternary structure, monomer. Mg(2+) serves as cofactor.

It is found in the cytoplasm. The enzyme catalyses shikimate + ATP = 3-phosphoshikimate + ADP + H(+). It functions in the pathway metabolic intermediate biosynthesis; chorismate biosynthesis; chorismate from D-erythrose 4-phosphate and phosphoenolpyruvate: step 5/7. In terms of biological role, catalyzes the specific phosphorylation of the 3-hydroxyl group of shikimic acid using ATP as a cosubstrate. This is Shikimate kinase from Paracidovorax citrulli (strain AAC00-1) (Acidovorax citrulli).